The following is a 78-amino-acid chain: Large ribosomal subunit protein uL29 (78 aa).

Belongs to the universal ribosomal protein uL29 family.

This chain is Large ribosomal subunit protein uL29, found in Rhodococcus erythropolis (strain PR4 / NBRC 100887).